Here is a 405-residue protein sequence, read N- to C-terminus: MEEDNQEIQRDNVGSSSFFKTCFNALNALSGIGILSVPYSLARGGWLSLSLLLLLAVTAFYTSLLITKCMNADRNIKTYPDIGERAFGRPGRIIVSVFMHLELYLVTTGFLILEGDNLHNLFPGFTIEMIGLRLNGKQAFMATVAFVIMPTLWWDNLSVLSYVSMSGVLATTVTLGSISWIGAFDGIGFHQKGKLINWSGIPTALSLYAFCYGAHPVLPTLYSSMKSKHQFNNVLLICFILCTIGYTSMAVLGYLMYGSQTLSQITLNLPIHKTSSKVAIYTTLVNPVAKYALMITPTVNTIKDWFPSRYSKKAYLHLLISTFFIISSVVIAETLPFFGYMMSLVGALLSVTVSILLPCLCYLKIFGNYKKIGCETIMLFGMVVMSVFVGVIGTYIALRDIIGSV.

Transmembrane regions (helical) follow at residues 22–42 (CFNA…YSLA), 46–66 (WLSL…SLLI), 93–113 (IIVS…FLIL), 140–160 (FMAT…LSVL), 169–189 (LATT…GIGF), 201–221 (IPTA…LPTL), 234–254 (VLLI…VLGY), 278–298 (VAIY…ITPT), 318–338 (LLIS…LPFF), 343–363 (SLVG…LCYL), and 377–397 (IMLF…TYIA).

This sequence belongs to the amino acid/polyamine transporter 2 family. Amino acid/auxin permease (AAAP) (TC 2.A.18.5) subfamily.

It localises to the membrane. The protein is Amino acid transporter AVT1I of Arabidopsis thaliana (Mouse-ear cress).